The following is a 179-amino-acid chain: Large ribosomal subunit protein uL5 (179 aa).

Belongs to the universal ribosomal protein uL5 family. Part of the 50S ribosomal subunit; part of the 5S rRNA/L5/L18/L25 subcomplex. Contacts the 5S rRNA and the P site tRNA. Forms a bridge to the 30S subunit in the 70S ribosome.

This is one of the proteins that bind and probably mediate the attachment of the 5S RNA into the large ribosomal subunit, where it forms part of the central protuberance. In the 70S ribosome it contacts protein S13 of the 30S subunit (bridge B1b), connecting the 2 subunits; this bridge is implicated in subunit movement. Contacts the P site tRNA; the 5S rRNA and some of its associated proteins might help stabilize positioning of ribosome-bound tRNAs. This chain is Large ribosomal subunit protein uL5, found in Alkalilimnicola ehrlichii (strain ATCC BAA-1101 / DSM 17681 / MLHE-1).